Consider the following 554-residue polypeptide: Condensin-2 complex subunit H2 (554 aa).

Ser-45, Ser-178, Ser-182, Ser-199, and Ser-200 each carry phosphoserine. The disordered stretch occupies residues 154–296; the sequence is PVDVHPMPRS…GQKRKRKGAT (143 aa). Residues 179-191 are compositionally biased toward polar residues; the sequence is RNGSPVSVRSISQ. The span at 201–210 shows a compositional bias: acidic residues; it reads GDEDAEDVAE. Phosphoserine is present on Ser-441.

Belongs to the CND2 H2 (condensin-2 subunit 2) family. As to quaternary structure, component of the condensin-2 complex, which contains the SMC2 and SMC4 heterodimer, and three non SMC subunits, NCAPG2, NCAPH2 and NCAPD3 that probably regulate the complex.

Its subcellular location is the nucleus. In terms of biological role, regulatory subunit of the condensin-2 complex, a complex that seems to provide chromosomes with an additional level of organization and rigidity and in establishing mitotic chromosome architecture. May promote the resolution of double-strand DNA catenanes (intertwines) between sister chromatids. Condensin-mediated compaction likely increases tension in catenated sister chromatids, providing directionality for type II topoisomerase-mediated strand exchanges toward chromatid decatenation. Required for decatenation of chromatin bridges at anaphase. Early in neurogenesis, may play an essential role to ensure accurate mitotic chromosome condensation in neuron stem cells, ultimately affecting neuron pool and cortex size. Seems to have lineage-specific role in T-cell development. The protein is Condensin-2 complex subunit H2 (Ncaph2) of Rattus norvegicus (Rat).